The chain runs to 151 residues: Ribosome maturation factor RimP (151 aa).

This sequence belongs to the RimP family.

The protein localises to the cytoplasm. In terms of biological role, required for maturation of 30S ribosomal subunits. The polypeptide is Ribosome maturation factor RimP (Caldicellulosiruptor saccharolyticus (strain ATCC 43494 / DSM 8903 / Tp8T 6331)).